Here is a 477-residue protein sequence, read N- to C-terminus: Ribulose bisphosphate carboxylase large chain (477 aa).

Residues 1–2 (MS) constitute a propeptide that is removed on maturation. N-acetylproline is present on Pro-3. Position 14 is an N6,N6,N6-trimethyllysine (Lys-14). Substrate is bound by residues Asn-123 and Thr-173. Catalysis depends on Lys-175, which acts as the Proton acceptor. Lys-177 is a substrate binding site. 3 residues coordinate Mg(2+): Lys-201, Asp-203, and Glu-204. Lys-201 carries the post-translational modification N6-carboxylysine. Residue His-294 is the Proton acceptor of the active site. Substrate-binding residues include Arg-295, His-327, and Ser-379.

This sequence belongs to the RuBisCO large chain family. Type I subfamily. As to quaternary structure, heterohexadecamer of 8 large chains and 8 small chains; disulfide-linked. The disulfide link is formed within the large subunit homodimers. The cofactor is Mg(2+). The disulfide bond which can form in the large chain dimeric partners within the hexadecamer appears to be associated with oxidative stress and protein turnover.

It is found in the plastid. The protein localises to the chloroplast. It carries out the reaction 2 (2R)-3-phosphoglycerate + 2 H(+) = D-ribulose 1,5-bisphosphate + CO2 + H2O. The enzyme catalyses D-ribulose 1,5-bisphosphate + O2 = 2-phosphoglycolate + (2R)-3-phosphoglycerate + 2 H(+). RuBisCO catalyzes two reactions: the carboxylation of D-ribulose 1,5-bisphosphate, the primary event in carbon dioxide fixation, as well as the oxidative fragmentation of the pentose substrate in the photorespiration process. Both reactions occur simultaneously and in competition at the same active site. The protein is Ribulose bisphosphate carboxylase large chain of Hyophorbe lagenicaulis (Bottle palm).